Here is a 330-residue protein sequence, read N- to C-terminus: Inositol 2-dehydrogenase (330 aa).

The protein belongs to the Gfo/Idh/MocA family.

It carries out the reaction myo-inositol + NAD(+) = scyllo-inosose + NADH + H(+). It functions in the pathway polyol metabolism; myo-inositol degradation into acetyl-CoA; acetyl-CoA from myo-inositol: step 1/7. Functionally, involved in the oxidation of myo-inositol (MI) to 2-keto-myo-inositol (2KMI or 2-inosose). The protein is Inositol 2-dehydrogenase (idhA) of Rhizobium meliloti (strain 1021) (Ensifer meliloti).